The chain runs to 491 residues: MIFHKNWLGLIFLLLFLGIINVMRVPRDNSVKLKRTALEWSLATLTATLILWAAFDMEGQFQTINQTEWIVPPALNFKWGPLFLAVDGISLFFLILTALLTPICILISWNSIKFLLKEFLLCLLFLEVLLMGVFSALDLLLFYILFEGILIPMFLLIGVWGSREEKVRASYYFFFYTFVGSVFMLLGIFQLYSSVGTTDYQALLNIELPISTQKWIFAGFFLSLAVKIPQVPFHIWLPQAHVEAPVSGSVILAGILLKLGGYGFLRFTWPILPAATEYFAPFVIMLSVIAIIYGSLTTCRQVDLKRLIAYSSVAHMGLVTLGLFTHTIEGLVAAVFMMLAHGLVSSALFIAVTYLYERHHTRLIKYYRGITFSMPIFVSVFLVLTLTNMAIPLSCNFVAEFFSLLAAFEYNIVIGVLAATGMVWSAAYSLYLYNRVSFGASSNYLLFTRDLNRRELIAISPLVILIFILGVLPSLIIDPVKNAIMFSPGGA.

14 helical membrane passes run 2–22 (IFHKNWLGLIFLLLFLGIINV), 37–57 (ALEWSLATLTATLILWAAFDM), 89–109 (ISLFFLILTALLTPICILISW), 114–134 (FLLKEFLLCLLFLEVLLMGVF), 139–159 (LLLFYILFEGILIPMFLLIGV), 169–189 (ASYYFFFYTFVGSVFMLLGIF), 215–235 (WIFAGFFLSLAVKIPQVPFHI), 245–265 (PVSGSVILAGILLKLGGYGFL), 271–291 (ILPAATEYFAPFVIMLSVIAI), 308–328 (IAYSSVAHMGLVTLGLFTHTI), 332–352 (VAAVFMMLAHGLVSSALFIAV), 372–392 (FSMPIFVSVFLVLTLTNMAIP), 412–432 (IVIGVLAATGMVWSAAYSLYL), and 457–477 (IAISPLVILIFILGVLPSLII).

It belongs to the complex I subunit 4 family.

The protein resides in the mitochondrion membrane. It catalyses the reaction a ubiquinone + NADH + 5 H(+)(in) = a ubiquinol + NAD(+) + 4 H(+)(out). In terms of biological role, core subunit of the mitochondrial membrane respiratory chain NADH dehydrogenase (Complex I) that is believed to belong to the minimal assembly required for catalysis. Complex I functions in the transfer of electrons from NADH to the respiratory chain. The immediate electron acceptor for the enzyme is believed to be ubiquinone. In Metridium senile (Brown sea anemone), this protein is NADH-ubiquinone oxidoreductase chain 4 (ND4).